The chain runs to 645 residues: Heat shock protein SSA2 (645 aa).

An N-acetylserine modification is found at Ser-2. Positions 581–645 are disordered; the sequence is ANQTATQEEF…NDGPTVEEVD (65 aa). A compositionally biased stretch (low complexity) spans 611-621; the sequence is AGATPSGAAGA.

Belongs to the heat shock protein 70 family. Binds human histatin-5, an antifungal peptide from saliva.

It is found in the cytoplasm. The protein resides in the secreted. The protein localises to the cell wall. Its function is as follows. Heat shock protein that may play a role in the transport of polypeptides both across the mitochondrial membranes and into the endoplasmic reticulum. Functionally, acts as a highly immunodominant antigen. Plays a role in the sensitivity to, and the import of candidacidal beta-defensin peptides. HSP70/SSA1 and SSA2 bind histatin-5, a peptide from human saliva, and mediates its fungicidal activity. SSA2 facilitates fungicidal activity of Hst 5 in binding and intracellular translocation, whereas HSP70/SSA1 appears to have a lesser functional role in Hst 5 toxicity. The chain is Heat shock protein SSA2 from Candida albicans (strain SC5314 / ATCC MYA-2876) (Yeast).